The chain runs to 176 residues: 3-hydroxydecanoyl-[acyl-carrier-protein] dehydratase (176 aa).

Residue histidine 75 is part of the active site.

It belongs to the thioester dehydratase family. FabA subfamily. Homodimer.

The protein resides in the cytoplasm. It carries out the reaction a (3R)-hydroxyacyl-[ACP] = a (2E)-enoyl-[ACP] + H2O. The catalysed reaction is (3R)-hydroxydecanoyl-[ACP] = (2E)-decenoyl-[ACP] + H2O. It catalyses the reaction (2E)-decenoyl-[ACP] = (3Z)-decenoyl-[ACP]. The protein operates within lipid metabolism; fatty acid biosynthesis. In terms of biological role, necessary for the introduction of cis unsaturation into fatty acids. Catalyzes the dehydration of (3R)-3-hydroxydecanoyl-ACP to E-(2)-decenoyl-ACP and then its isomerization to Z-(3)-decenoyl-ACP. Can catalyze the dehydratase reaction for beta-hydroxyacyl-ACPs with saturated chain lengths up to 16:0, being most active on intermediate chain length. This Glaesserella parasuis serovar 5 (strain SH0165) (Haemophilus parasuis) protein is 3-hydroxydecanoyl-[acyl-carrier-protein] dehydratase.